We begin with the raw amino-acid sequence, 322 residues long: Mas-related G-protein coupled receptor member B5 (322 aa).

At 1–34 (MGLTTPAWNINNTVVNGSNNTEHFSCVSKFNTLN) the chain is on the extracellular side. Residues N11, N16, and N19 are each glycosylated (N-linked (GlcNAc...) asparagine). A helical membrane pass occupies residues 35–55 (FLTVIIAMFGLAGNAIVLWLL). The Cytoplasmic segment spans residues 56 to 70 (AFHLPRNAFSVYVCN). The chain crosses the membrane as a helical span at residues 71-91 (LACADFLQLCTQILGSLECFL). The Extracellular portion of the chain corresponds to 92–98 (QLNRRHT). A helical membrane pass occupies residues 99–119 (FFLTVVFMFAYLAGLCMIAAI). The Cytoplasmic portion of the chain corresponds to 120–147 (SVERSLSVMWPIWYHCQRPRHTSSIMCA). Residues 148–168 (LLWAFCLLLNFLLGEGCGLLF) traverse the membrane as a helical segment. Topologically, residues 169 to 172 (SDPK) are extracellular. The chain crosses the membrane as a helical span at residues 173-193 (YYFCITCALITTALIILLTVV). Residues 194–216 (PSVSSLALLVKMICGSHRIPVTR) are Cytoplasmic-facing. The helical transmembrane segment at 217-237 (FYVTIALTLVVFIFLGLPFGI) threads the bilayer. At 238 to 260 (YSSFLIMFKEFQSIFSYHVLEVT) the chain is on the extracellular side. The helical transmembrane segment at 261–281 (IFLSCVNSCANPIIYFLVGSI) threads the bilayer. Over 282–322 (RQHRLQWQSLKLLLQRAMQDTPEEDSGERVPSQRSGELESV) the chain is Cytoplasmic. Residues 302–322 (TPEEDSGERVPSQRSGELESV) form a disordered region.

This sequence belongs to the G-protein coupled receptor 1 family. Mas subfamily.

It is found in the membrane. Its function is as follows. Orphan receptor. Probably involved in the function of nociceptive neurons. May regulate nociceptor function and/or development, including the sensation or modulation of pain. This chain is Mas-related G-protein coupled receptor member B5 (Mrgprb5), found in Mus musculus (Mouse).